The following is a 396-amino-acid chain: Inhibitory POU protein (396 aa).

The POU-IV box signature appears at 86-95 (RAEALAAVDI). In terms of domain architecture, POU-specific spans 222-299 (DTDTDPRELE…ILQAWLEEAE (78 aa)). Residues 302-328 (AKNKRRDPDAPSVLPAGEKKRKRTSIA) form a disordered region. Positions 320–377 (KKRKRTSIAAPEKRSLEAYFAVQPRPSGEKIAAIAEKLDLKKNVVRVWFCNQRQKQKR) form a DNA-binding region, homeobox; atypical.

Belongs to the POU transcription factor family. Class-4 subfamily. In terms of tissue distribution, coexpressed with vvl in overlapping subsets of neurons in the embryonic central nervous system. Expressed in olfactory neurons.

It is found in the nucleus. Functionally, modulates gene transcription; simultaneously generates both a specific activator and an inhibitor of gene transcription, capable of modulating two distinct regulatory programs during neural development. Has a role in olfactory behavior. This is Inhibitory POU protein (acj6) from Drosophila melanogaster (Fruit fly).